We begin with the raw amino-acid sequence, 296 residues long: Decaprenyl diphosphate synthase (296 aa).

A disordered region spans residues 1–24 (MARDARKRTSSNFPQLPPAPDDYP). The active site involves aspartate 76. Residue aspartate 76 participates in Mg(2+) binding. Residues 76-80 (DGNGR), tryptophan 81, arginine 89, histidine 93, 121-124 (STEN), tryptophan 125, arginine 127, arginine 168, arginine 244, and 250-252 (RSS) each bind substrate. The Proton acceptor role is filled by asparagine 124. Residue glutamate 263 participates in Mg(2+) binding. 292-294 (RFG) contacts substrate.

This sequence belongs to the UPP synthase family. Homodimer. Mg(2+) is required as a cofactor. Requires Mn(2+) as cofactor.

It localises to the cell membrane. It catalyses the reaction (2Z,6E)-farnesyl diphosphate + 7 isopentenyl diphosphate = (2Z,6Z,10Z,14Z,18Z,22Z,26Z,30Z,34E)-decaprenyl diphosphate + 7 diphosphate. It carries out the reaction n isopentenyl diphosphate + (2E,6E)-farnesyl diphosphate = a di-trans,poly-cis-polyprenyl diphosphate + n diphosphate. Its activity is regulated as follows. Activated by dithiothreitol and inhibited by EDTA. Catalyzes the sequential condensation of isopentenyl diphosphate (IPP) in the cis configuration with (2Z,6E)-farnesyl diphosphate (Z-FPP or EZ-FPP) generating the 50 carbon product trans,polycis-decaprenyl diphosphate. When (2E,6E)-farnesyl diphosphate (E-FPP or EE-FPP) is used in vitro, both primary products decaprenyl diphosphate and (2E,6E,10E)-geranylgeranyl diphosphate (EEE-GGPP) are synthesized. M.tuberculosis does not synthesize (2E,6E,10Z)-geranylgeranyl diphosphate (EEZ-GGPP) and heptaprenyl diphosphate. Can also accept many different allylic substrates, including E-geranyl diphosphate (E-GPP), neryl diphosphate (NPP), and all-trans-geranyl-geranyl diphosphate. The polypeptide is Decaprenyl diphosphate synthase (uppS) (Mycobacterium tuberculosis (strain ATCC 25618 / H37Rv)).